The primary structure comprises 351 residues: Holliday junction branch migration complex subunit RuvB (351 aa).

Residues 1 to 182 (MNDRLITPDA…FGIVQRLEYY (182 aa)) are large ATPase domain (RuvB-L). ATP contacts are provided by residues I21, R22, G63, K66, T67, T68, 129-131 (EDF), R172, Y182, and R219. T67 contributes to the Mg(2+) binding site. The segment at 183-253 (NVADLSGIVK…VAHAAMELLN (71 aa)) is small ATPAse domain (RuvB-S). The tract at residues 256–351 (RNGFDEQDRR…QDAPPVGRER (96 aa)) is head domain (RuvB-H). R292, R311, and R316 together coordinate DNA. The segment at 328–351 (LNPPRQPDTSPDLFQDAPPVGRER) is disordered.

It belongs to the RuvB family. Homohexamer. Forms an RuvA(8)-RuvB(12)-Holliday junction (HJ) complex. HJ DNA is sandwiched between 2 RuvA tetramers; dsDNA enters through RuvA and exits via RuvB. An RuvB hexamer assembles on each DNA strand where it exits the tetramer. Each RuvB hexamer is contacted by two RuvA subunits (via domain III) on 2 adjacent RuvB subunits; this complex drives branch migration. In the full resolvosome a probable DNA-RuvA(4)-RuvB(12)-RuvC(2) complex forms which resolves the HJ.

It is found in the cytoplasm. The catalysed reaction is ATP + H2O = ADP + phosphate + H(+). In terms of biological role, the RuvA-RuvB-RuvC complex processes Holliday junction (HJ) DNA during genetic recombination and DNA repair, while the RuvA-RuvB complex plays an important role in the rescue of blocked DNA replication forks via replication fork reversal (RFR). RuvA specifically binds to HJ cruciform DNA, conferring on it an open structure. The RuvB hexamer acts as an ATP-dependent pump, pulling dsDNA into and through the RuvAB complex. RuvB forms 2 homohexamers on either side of HJ DNA bound by 1 or 2 RuvA tetramers; 4 subunits per hexamer contact DNA at a time. Coordinated motions by a converter formed by DNA-disengaged RuvB subunits stimulates ATP hydrolysis and nucleotide exchange. Immobilization of the converter enables RuvB to convert the ATP-contained energy into a lever motion, pulling 2 nucleotides of DNA out of the RuvA tetramer per ATP hydrolyzed, thus driving DNA branch migration. The RuvB motors rotate together with the DNA substrate, which together with the progressing nucleotide cycle form the mechanistic basis for DNA recombination by continuous HJ branch migration. Branch migration allows RuvC to scan DNA until it finds its consensus sequence, where it cleaves and resolves cruciform DNA. In Alkalilimnicola ehrlichii (strain ATCC BAA-1101 / DSM 17681 / MLHE-1), this protein is Holliday junction branch migration complex subunit RuvB.